The following is a 642-amino-acid chain: Probable glutamate--tRNA ligase, cytoplasmic (642 aa).

152–154 is a binding site for L-glutamate; it reads RFP. Positions 157 to 166 match the 'HIGH' region motif; that stretch reads PNGRLHIGHA. His162 serves as a coordination point for ATP. Residues Asp188, 326–330, and Arg344 each bind L-glutamate; that span reads YDFAC. ATP contacts are provided by residues Glu347 and 382–386; that span reads VLSKR. The short motif at 382 to 386 is the 'KMSKS' region element; that stretch reads VLSKR.

This sequence belongs to the class-I aminoacyl-tRNA synthetase family. Glutamate--tRNA ligase type 2 subfamily.

It localises to the cytoplasm. The catalysed reaction is tRNA(Glu) + L-glutamate + ATP = L-glutamyl-tRNA(Glu) + AMP + diphosphate. The sequence is that of Probable glutamate--tRNA ligase, cytoplasmic from Encephalitozoon cuniculi (strain GB-M1) (Microsporidian parasite).